The sequence spans 262 residues: Nurim (262 aa).

Topologically, residues 1–4 (MAPA) are nuclear. A helical membrane pass occupies residues 5–28 (LLLVPAALASFILAFGTGVEFVRF). Topologically, residues 29 to 58 (TSLRPLLGGIPESGGPDARQGWLAALQDQS) are perinuclear space. Residues 59-80 (ILVPLAWDLGLLLLFVGQHSLM) form a helical membrane-spanning segment. Residues 81-97 (ATETVKAWMSRYFGVLQ) are Nuclear-facing. The helical transmembrane segment at 98–114 (RSLYVACTALALQLVMR) threads the bilayer. The Perinuclear space segment spans residues 115-133 (YWEPVPRGPVLWEAQAEPW). The helical transmembrane segment at 134–164 (ATWVPLLCFVLHVISWLLIFSILLVFDYAEL) threads the bilayer. Residues 165–191 (MGLKQVYYHVLGLGEPLALKSPRALRL) are Nuclear-facing. The chain crosses the membrane as a helical span at residues 192–210 (FSHLRHPVCVELLTVLWVV). The Perinuclear space portion of the chain corresponds to 211–216 (PTLGTD). Residues 217–234 (RLLLALLLTLYLGLAHGL) form a helical membrane-spanning segment. The Nuclear segment spans residues 235 to 262 (DQQDLRYLRAQLQRKLHLLSRPQDGEAE).

The protein belongs to the nurim family.

The protein localises to the nucleus inner membrane. In Sus scrofa (Pig), this protein is Nurim (NRM).